The primary structure comprises 196 residues: Molybdenum cofactor guanylyltransferase (196 aa).

Residues 14 to 16, K27, D73, and D106 each bind GTP; that span reads LAG. Residue D106 coordinates Mg(2+).

This sequence belongs to the MobA family. As to quaternary structure, monomer. Requires Mg(2+) as cofactor.

The protein resides in the cytoplasm. It catalyses the reaction Mo-molybdopterin + GTP + H(+) = Mo-molybdopterin guanine dinucleotide + diphosphate. In terms of biological role, transfers a GMP moiety from GTP to Mo-molybdopterin (Mo-MPT) cofactor (Moco or molybdenum cofactor) to form Mo-molybdopterin guanine dinucleotide (Mo-MGD) cofactor. The protein is Molybdenum cofactor guanylyltransferase of Acidiphilium cryptum (strain JF-5).